The following is a 376-amino-acid chain: Actin-like protein 53D (376 aa).

The tract at residues 1-40 (MSSEVDSNSHHAAVVIDNGSGVCKAGFSPEDTPRAVFPSI) is necessary and sufficient for recruitment to the fusome and actin cones of spermatocyte cysts.

The protein belongs to the actin family. ARP1 subfamily. High expression in males whereas expression in females is very low. In adult males, highest levels of expression are in the testis. In adult females, expressed only in the ovaries at very low levels. In larvae, highly expressed in the imaginal disk whereas in prepupae and pupae modest levels of expression occur in the fat body.

The protein resides in the cytoplasm. It is found in the cytoskeleton. Functionally, required for optimal embryo development, particularly under heat stress conditions. Also appears to have a role in negatively regulating spermatocyte cyst development. Under heat stress conditions, required for the correct organization and migration of nuclei during early embryogenesis, and therefore possibly functions by regulating embryonic actin networks during the heat stress response. This chain is Actin-like protein 53D, found in Drosophila melanogaster (Fruit fly).